The sequence spans 492 residues: Alpha-amylase-related protein (492 aa).

The N-terminal stretch at 1-18 is a signal peptide; the sequence is MRLSLSVLLCLGLALTLA. Gln-19 carries the pyrrolidone carboxylic acid modification. Cysteines 46 and 102 form a disulfide. Residues Asn-116, Gln-167, and Asp-176 each coordinate Ca(2+). Cys-155 and Cys-169 are oxidised to a cystine. Arg-204 is a binding site for chloride. Residue Asp-206 is the Nucleophile of the active site. His-210 provides a ligand contact to Ca(2+). Glu-243 (proton donor) is an active-site residue. The chloride site is built by Asn-306 and Arg-341. 3 disulfide bridges follow: Cys-374–Cys-380, Cys-416–Cys-439, and Cys-446–Cys-458.

This sequence belongs to the glycosyl hydrolase 13 family. Monomer. Ca(2+) is required as a cofactor. It depends on chloride as a cofactor.

The protein localises to the secreted. The catalysed reaction is Endohydrolysis of (1-&gt;4)-alpha-D-glucosidic linkages in polysaccharides containing three or more (1-&gt;4)-alpha-linked D-glucose units.. The sequence is that of Alpha-amylase-related protein (Amyrel) from Drosophila willistoni (Fruit fly).